Here is a 478-residue protein sequence, read N- to C-terminus: Glycogen synthase (478 aa).

Lys-15 is an ADP-alpha-D-glucose binding site.

This sequence belongs to the glycosyltransferase 1 family. Bacterial/plant glycogen synthase subfamily.

The enzyme catalyses [(1-&gt;4)-alpha-D-glucosyl](n) + ADP-alpha-D-glucose = [(1-&gt;4)-alpha-D-glucosyl](n+1) + ADP + H(+). Its pathway is glycan biosynthesis; glycogen biosynthesis. Functionally, synthesizes alpha-1,4-glucan chains using ADP-glucose. This is Glycogen synthase from Bacillus cytotoxicus (strain DSM 22905 / CIP 110041 / 391-98 / NVH 391-98).